The primary structure comprises 166 residues: Spiderine-1a (166 aa).

An N-terminal signal peptide occupies residues 1 to 18 (MKFALVLLGVCAFYLVNA). A propeptide spanning residues 19 to 58 (TGDLETELEASELQELQEALDLIGETPLESLEAEELEEAR) is cleaved from the precursor. Positions 59–99 (KFKWGKLFSTAKKLYKKGKKLSKNKNFKKALKFGKQLAKNL) are linear cationic cytotoxin domain. Positions 113–166 (NNKCWAIGTTCSDDCDCCPEHHCHCPAGKWLPGLFRCTCQVTESDKVNKCPPAE) constitute an Oxytoxin-type inhibitor cystine knot (ICK) domain. 5 disulfide bridges follow: cysteine 116-cysteine 130, cysteine 123-cysteine 135, cysteine 127-cysteine 162, cysteine 129-cysteine 151, and cysteine 137-cysteine 149.

It belongs to the spiderine family. Cationic/spiderine subfamily. Expressed by the venom gland.

The protein localises to the secreted. In terms of biological role, has antimicrobial, insecticidal, cytolytic and cytotoxic activity. Active against E.coli DH5alpha, E.faecalis VKM B 871, B.subtilis VKM B 501, A.globiformis VKM Ac 1112, P.aeruginosa PAO1 and S.aureus 209P in submicromolar or low micromolar ranges. Lyses human erythrocytes. Kills HeLA and A549 cells. This chain is Spiderine-1a, found in Oxyopes takobius (Lynx spider).